A 472-amino-acid polypeptide reads, in one-letter code: Alanine--anticapsin ligase (472 aa).

Glutamate 109 is a binding site for Mg(2+). Residues lysine 138 and lysine 178 each contribute to the ATP site. An ATP-grasp domain is found at 142–355 (RAAFNRAGVK…MAQLLLDVLC (214 aa)). Leucine 182 is a binding site for Mg(2+). Residues 184–185 (SS), 226–229 (EEFL), and glutamine 268 each bind ATP. Residues glutamate 273 and 309–311 (HTE) each bind substrate. Mg(2+) is bound by residues glutamate 311 and glutamate 324. 328–331 (RFAG) contacts substrate.

In terms of assembly, monomer or homodimer. Mg(2+) is required as a cofactor.

The enzyme catalyses L-anticapsin + L-alanine + ATP = bacilysin + ADP + phosphate + H(+). The protein operates within antibiotic biosynthesis; bacilysin biosynthesis. Part of the bacABCDEFG operon responsible for the biosynthesis of bacilysin, an irreversible inactivator of the glutaminase domain of glucosamine synthetase. Catalyzes the formation of alpha-dipeptides from various L-amino acids in the presence of ATP. In vivo catalyzes the ligation of L-alanine and L-anticapsin (epoxycyclohexanonyl-Ala) to produce the final bacilysin antibiotic (L-Ala-L-4S-cyclohexenonyl-Ala dipeptide). This is Alanine--anticapsin ligase from Bacillus subtilis.